The chain runs to 2135 residues: Nonribosomal peptide synthetase gliP (2135 aa).

The tract at residues 34 to 424 is adenylation 1; sequence TYTELDVASS…LPADVEEPLR (391 aa). One can recognise a Carrier 1 domain in the interval 519–594; sequence TEREQVIAEC…GILPYARDLA (76 aa). Ser-555 carries the O-(pantetheine 4'-phosphoryl)serine modification. Residues 663–913 form a condensation 1 region; sequence AEHICNAWRQ…MATLPLVCRI (251 aa). The adenylation 2 stretch occupies residues 1078-1458; it reads YRELDQKSNA…YQEEPRLTQA (381 aa). The region spanning 1544–1622 is the Carrier 2 domain; that stretch reads ASIADGIATL…EQVELVRRKR (79 aa). Ser-1582 carries the O-(pantetheine 4'-phosphoryl)serine modification. The interval 1642-1905 is condensation 2; it reads SPLERQTWFQ…FLDRLPLRFK (264 aa). In terms of domain architecture, Carrier 3 spans 2061 to 2134; that stretch reads RRLVGILQRE…DLAQRLYRQV (74 aa). Ser-2095 is modified (O-(pantetheine 4'-phosphoryl)serine).

It belongs to the NRP synthetase family.

It functions in the pathway mycotoxin biosynthesis. Nonribosomal peptide synthetase; part of the gene cluster that mediates the biosynthesis of gliotoxin, a member of the epipolythiodioxopiperazine (ETP) class of toxins characterized by a disulfide-bridged cyclic dipeptide. The first step in gliotoxin biosynthesis is the condensation of serine and phenylalanine to form the cyclo-L-phenylalanyl-L-serine diketopiperazine (DKP) by the NRPS gliP. GliP is also able to produce the DKP cyclo-L-tryptophanyl-L-serine, suggesting that the substrate specificity of the first adenylation (A) domain in gliP is sufficiently relaxed to accommodate both L-Phe and L-Trp. The cytochrome P450 monooxygenase gliC has been shown to catalyze the subsequent hydroxylation of the alpha-carbon of L-Phe in cyclo-L-phenylalanyl-L-serine whereas the second cytochrome P450 enzyme, gliF, is presumably involved in the modification of the DKP side chain. The glutathione S-transferase (GST) gliG then forms a bis-glutathionylated biosynthetic intermediate which is responsible for the sulfurization of gliotoxin. This bis-glutathionylated intermediate is subsequently processed by the gamma-glutamyl cyclotransferase gliK to remove both gamma-glutamyl moieties. Subsequent processing via gliI yields a biosynthetic intermediate, which is N-methylated via the N-methyltransferase gliN, before the gliotoxin oxidoreductase gliT-mediated disulfide bridge closure. GliN-mediated amide methylation confers stability to ETP, damping the spontaneous formation of tri- and tetrasulfides. Intracellular dithiol gliotoxin oxidized by gliT is subsequently effluxed by gliA. Gliotoxin contributes to pathogenesis during invasive aspergillosis. In macrophages and neutrophils, gliotoxin showed inhibition of various different cell functions including cytokine production, antigen presentation, phagocytosis, and production of reactive oxygen species. This Aspergillus fumigatus (strain ATCC MYA-4609 / CBS 101355 / FGSC A1100 / Af293) (Neosartorya fumigata) protein is Nonribosomal peptide synthetase gliP.